A 165-amino-acid chain; its full sequence is Lipoprotein signal peptidase (165 aa).

3 helical membrane-spanning segments follow: residues 9-29 (FLAISFFVLIDWVSKLAVLLY), 69-89 (KYFLFAIRIAIILGILAFLFL), and 98-118 (IRFSLILLCSGAIGNVGDILF). Residues Asp124 and Asp142 contribute to the active site. The helical transmembrane segment at 133 to 153 (WYFPTFNFADIFISLGTFIFV) threads the bilayer.

It belongs to the peptidase A8 family.

Its subcellular location is the cell inner membrane. It carries out the reaction Release of signal peptides from bacterial membrane prolipoproteins. Hydrolyzes -Xaa-Yaa-Zaa-|-(S,diacylglyceryl)Cys-, in which Xaa is hydrophobic (preferably Leu), and Yaa (Ala or Ser) and Zaa (Gly or Ala) have small, neutral side chains.. It functions in the pathway protein modification; lipoprotein biosynthesis (signal peptide cleavage). In terms of biological role, this protein specifically catalyzes the removal of signal peptides from prolipoproteins. This is Lipoprotein signal peptidase from Chlamydia caviae (strain ATCC VR-813 / DSM 19441 / 03DC25 / GPIC) (Chlamydophila caviae).